Reading from the N-terminus, the 672-residue chain is DNA ligase (672 aa).

Residues 37–41 (DAEYD), 86–87 (SL), and Glu-115 contribute to the NAD(+) site. The active-site N6-AMP-lysine intermediate is Lys-117. Arg-138, Glu-172, Lys-288, and Lys-312 together coordinate NAD(+). Positions 406, 409, 424, and 429 each coordinate Zn(2+). The 83-residue stretch at 590-672 (DISSTFAGKT…LQEIQQSKQV (83 aa)) folds into the BRCT domain.

This sequence belongs to the NAD-dependent DNA ligase family. LigA subfamily. Mg(2+) is required as a cofactor. The cofactor is Mn(2+).

It catalyses the reaction NAD(+) + (deoxyribonucleotide)n-3'-hydroxyl + 5'-phospho-(deoxyribonucleotide)m = (deoxyribonucleotide)n+m + AMP + beta-nicotinamide D-nucleotide.. In terms of biological role, DNA ligase that catalyzes the formation of phosphodiester linkages between 5'-phosphoryl and 3'-hydroxyl groups in double-stranded DNA using NAD as a coenzyme and as the energy source for the reaction. It is essential for DNA replication and repair of damaged DNA. This chain is DNA ligase, found in Anoxybacillus flavithermus (strain DSM 21510 / WK1).